The chain runs to 159 residues: Large ribosomal subunit protein uL15 (159 aa).

Residues M1–R18 show a composition bias toward basic and acidic residues. Residues M1–G37 are disordered. Residues R21–V35 show a composition bias toward gly residues.

This sequence belongs to the universal ribosomal protein uL15 family. In terms of assembly, part of the 50S ribosomal subunit.

Its function is as follows. Binds to the 23S rRNA. The sequence is that of Large ribosomal subunit protein uL15 from Agrobacterium fabrum (strain C58 / ATCC 33970) (Agrobacterium tumefaciens (strain C58)).